The sequence spans 545 residues: Glucose-6-phosphate isomerase (545 aa).

The active-site Proton donor is the Glu-351. Catalysis depends on residues His-382 and Lys-510.

Belongs to the GPI family.

The protein resides in the cytoplasm. The catalysed reaction is alpha-D-glucose 6-phosphate = beta-D-fructose 6-phosphate. It participates in carbohydrate biosynthesis; gluconeogenesis. Its pathway is carbohydrate degradation; glycolysis; D-glyceraldehyde 3-phosphate and glycerone phosphate from D-glucose: step 2/4. Catalyzes the reversible isomerization of glucose-6-phosphate to fructose-6-phosphate. This is Glucose-6-phosphate isomerase from Helicobacter pylori (strain HPAG1).